The sequence spans 409 residues: Putative lipoate-protein ligase A (409 aa).

Positions 146–330 (GPDNCRLVFY…RFQKTFKVDG (185 aa)) constitute a BPL/LPL catalytic domain. Residues Arg188, 193 to 196 (GTVL), and Lys249 each bind ATP. Lys249 contributes to the (R)-lipoate binding site.

The protein belongs to the LplA family. Monomer.

It carries out the reaction L-lysyl-[lipoyl-carrier protein] + (R)-lipoate + ATP = N(6)-[(R)-lipoyl]-L-lysyl-[lipoyl-carrier protein] + AMP + diphosphate + H(+). The protein operates within protein modification; protein lipoylation via exogenous pathway; protein N(6)-(lipoyl)lysine from lipoate: step 1/2. It participates in protein modification; protein lipoylation via exogenous pathway; protein N(6)-(lipoyl)lysine from lipoate: step 2/2. Functionally, catalyzes both the ATP-dependent activation of exogenously supplied lipoate to lipoyl-AMP and the transfer of the activated lipoyl onto the lipoyl domains of lipoate-dependent enzymes. This Saccharomyces cerevisiae (strain YJM789) (Baker's yeast) protein is Putative lipoate-protein ligase A (AIM22).